Reading from the N-terminus, the 473-residue chain is Presenilin-B (473 aa).

A disordered region spans residues 1–141 (MSSDNNNDPF…PLLNKKEKDD (141 aa)). Residues 1-164 (MSSDNNNDPF…DDEVSLQDFS (164 aa)) lie on the Cytoplasmic side of the membrane. The segment covering 22–46 (RVSTTTSPNRQSINSSPKQSSPKST) has biased composition (polar residues). Over residues 54-72 (NIILDLNDNNNDNNNTNNY) the composition is skewed to low complexity. The span at 79-89 (VDNKNKFENKD) shows a compositional bias: basic and acidic residues. A helical membrane pass occupies residues 165–185 (SMIVSIIIPVSITMMAVVFFV). The Lumenal portion of the chain corresponds to 186 to 224 (KYLNNQTLYASTLSYTIAGGSSGGGSGADSITGNSFVDS). Asn190 is a glycosylation site (N-linked (GlcNAc...) asparagine). Residues 225–245 (LIVAGIVLGMIIVTTVAFVLL) form a helical membrane-spanning segment. Over 246–252 (YKYRCLK) the chain is Cytoplasmic. A helical membrane pass occupies residues 253-273 (ILYGWLFLSVGMMLGSFGTTF). The Lumenal segment spans residues 274–286 (FQAMLSAANLPLD). Residues 287–307 (YITFAFLIFNFTVCGIIGVFW) traverse the membrane as a helical segment. Tyr308 is a topological domain (cytoplasmic). Residues 309-329 (AHQYVNQLYLVIISVLMAISL) traverse the membrane as a helical segment. Over 330–334 (TRLPQ) the chain is Lumenal. Residues 335 to 355 (WTIFTLLVIVAIYDLFAVLCP) form a helical membrane-spanning segment. The active site involves Asp348. Residues 356–389 (RGPLKVLVELSQERNENIPALVYETGKGSDSNLK) are Cytoplasmic-facing. The helical transmembrane segment at 390-410 (LGLGDFIFYSLLISRAALVHM) threads the bilayer. Asp394 is an active-site residue. At 411–413 (SCV) the chain is on the lumenal side. A helical transmembrane segment spans residues 414-434 (FSTFIAILTGLFLTLLCLAIF). The Cytoplasmic segment spans residues 435–442 (KKALPALP). Positions 439–441 (PAL) match the PAL motif. The helical intramembrane region spans 443–463 (ISIFLGILFYYLSNNFLTPFI). Over 464–473 (EALTLSQIFV) the chain is Cytoplasmic.

The protein belongs to the peptidase A22A family. As to quaternary structure, homodimer. Component of the gamma-secretase complex, a complex composed of a presenilin homodimer, nicastrin, aph1 and pen2.

It localises to the endoplasmic reticulum membrane. Its subcellular location is the golgi apparatus membrane. Functionally, probable catalytic subunit of the gamma-secretase complex, an endoprotease complex that catalyzes the intramembrane cleavage of integral membrane proteins such as Notch receptors. Requires the other members of the gamma-secretase complex to have a protease activity. The protein is Presenilin-B (psenB) of Dictyostelium discoideum (Social amoeba).